The following is a 188-amino-acid chain: MSMPTMTLVNQLLIALPSMPDPHFARGVALICQHDSNGSMGVVLNRPSEYTLGEVLFQMGIETASETLREQVVLAGGPVHPDRGFVIYDSEHVWGPSLLIGDGLYLTTSRDVLTAMAEGSGPSRALVALGCAGWAAGQLELELVENNWLMVPADASLLFDTALEQRWQRAAGRIGVDLFRLTDYTGHA.

It belongs to the UPF0301 (AlgH) family.

In Xylella fastidiosa (strain 9a5c), this protein is UPF0301 protein XF_2228.